Here is a 1054-residue protein sequence, read N- to C-terminus: MIPVVYSNLCPVCGGDLESKEIEKHVCFRKKRSLCLFPEDFLLKEFVEFFRKCVGEPRAIQKMWAKRILRKESFAATAPTGVGKTSFGLAMSLFLALKGKRCYVIFPTSLLVIQAAETIRKYAEKAGVGTENLIGYYHGRIPKREKENFMQNLRNFKIVITTTQFLSKHYRELGHFDFIFVDDVDAILKASKNVDKLLHLLGFHYDLKTKSWVGEARGCLMVSTATAKKGKKAELFRQLLNFDIGSSRITVRNVEDVAVNDESISTLSSILEKLGTGGIIYARTGEEAEEIYESLKNKFRIGIVTATKKGDYEKFVEGEIDHLIGTAHYYGTLVRGLDLPERIRFAVFVGCPSFRVTIEDIDSLSPQMVKLLAYLYRNVDEIERLLPAVERHIDEVREILKKVMGKERPQAKDVVVREGEVIFPDLRTYIQGSGRTSRLFAGGLTKGASFLLEDDSELLSAFIERAKLYDIEFKSIDEVDFEKLSRELDESRDRYRRRQEFDLIKPALFIVESPTKARQISRFFGKPSVKVLDGAVVYEIPMQKYVLMVTASIGHVVDLITNRGFHGVLVNGRFVPVYASIKRCRDCGYQFTEDRESCPKCGSENVDNSRSRIEALRKLAHDAEFVIVGTDPDTEGEKIAWDLKNLLSGCGAVKRAEFHEVTRRAILEALESLRDVDENLVKAQVVRRIEDRWIGFVLSQKLWERFNNRNLSAGRAQTPVLGWIIDRFQESRERRKIAIVRDFDLVLEHDEEEFDLTIKLVEEREELRTPLPPYTTETMLSDANRILKFSVKQTMQIAQELFENGLITYHRTDSTRVSDVGQRIAKEYLGDDFVGREWGESGAHECIRPTRPLTRDDVQRLIQEGVLVVEGLRWEHFALYDLIFRRFMASQCRPFKVVVKKYSIEFDGKTAEEERIVRAEGRAYELYRAVWVKNELPTGTFRVKAEVKSVPKVLPFTQSEIIQMMKERGIGRPSTYATIVDRLFMRNYVVEKYGRMIPTKLGIDVFRFLVRRYAKFVSEDRTRDLESRMDAIERGELDYLKALEDLYAEIKSID.

The segment at 1 to 43 (MIPVVYSNLCPVCGGDLESKEIEKHVCFRKKRSLCLFPEDFLL) adopts an RG N-terminal-type zinc-finger fold. The Zn(2+) site is built by C10, C13, C27, and C35. A disulfide bond links C35 and C650. The ATP site is built by Q61, K84, T85, and S86. A Helicase ATP-binding domain is found at 65 to 245 (AKRILRKESF…FRQLLNFDIG (181 aa)). Residues 182-185 (DDVD) carry the DEAD box motif. The tract at residues 352–427 (PSFRVTIEDI…EGEVIFPDLR (76 aa)) is latch region. The topoisomerase I stretch occupies residues 502–1054 (DLIKPALFIV…DLYAEIKSID (553 aa)). In terms of domain architecture, Toprim spans 506-662 (PALFIVESPT…VKRAEFHEVT (157 aa)). E512 is a Mg(2+) binding site. Residues 581–609 (IKRCRDCGYQFTEDRESCPKCGSENVDNS) form an RG C-terminal-type zinc finger. Residues C584, C587, C598, and C601 each coordinate Zn(2+). D631 is a Mg(2+) binding site. The region spanning 677-1054 (DENLVKAQVV…DLYAEIKSID (378 aa)) is the Topo IA-type catalytic domain. The active-site O-(5'-phospho-DNA)-tyrosine intermediate is the Y809.

It in the N-terminal section; belongs to the DEAD box helicase family. DDVD subfamily. This sequence in the C-terminal section; belongs to the type IA topoisomerase family. Monomer. Zn(2+) serves as cofactor. Mg(2+) is required as a cofactor.

The protein localises to the cytoplasm. The catalysed reaction is ATP + H2O = ADP + phosphate + H(+). Modifies the topological state of DNA by introducing positive supercoils in an ATP-dependent process, increasing the linking number in steps of +1. Very efficient supercoiling occurs on relaxed DNA with a single-stranded bubble; the minimal bubble is 20 nucleotides (nt) and up to 10 positive supercoils can be introduced into a 3.1 kb plasmid with a 50 nt bubble. Positively supercoils DNA with all (d)NTPS, although it requires about 10-fold more of non-(d)ATP. In the absence of ATP (or at low levels of enzyme), or in the presence of ADP, relaxes negative supercoils. Only relaxes positive supercoils when the substrate contains a bubble. Also promotes strand annealing of complementary ssDNA circles. Binds to single-stranded DNA, transiently cleaves and then rejoins the ends, introducing a positive supercoil in the process. The scissile phosphodiester is attacked by the catalytic tyrosine of the enzyme, resulting in the formation of a DNA-(5'-phosphotyrosyl)-enzyme intermediate. Probably involved in rewinding DNA strands in regions of the chromosome that have opened up to allow replication, transcription, DNA repair and/or for DNA protection. In terms of biological role, in vitro protects DNA against degradation at 90 degrees Celsius, reducing dsDNA breakage about 8-fold; ATP hydrolysis is not necessary, while ADP decreases the protection somewhat. Coats all forms of dsDNA; the DNA is protected against cleavage and transcription. Recognizes nicked DNA and forms a coat at the nicking site, which may help hold DNA in a structure amenable to repair. The protein is Reverse gyrase of Archaeoglobus fulgidus (strain ATCC 49558 / DSM 4304 / JCM 9628 / NBRC 100126 / VC-16).